Here is a 421-residue protein sequence, read N- to C-terminus: Peptide chain release factor subunit 1 (421 aa).

The protein belongs to the eukaryotic release factor 1 family. In terms of assembly, heterodimer of two subunits, one of which binds GTP.

The protein localises to the cytoplasm. Functionally, directs the termination of nascent peptide synthesis (translation) in response to the termination codons UAA, UAG and UGA. The sequence is that of Peptide chain release factor subunit 1 (prf1) from Methanocaldococcus jannaschii (strain ATCC 43067 / DSM 2661 / JAL-1 / JCM 10045 / NBRC 100440) (Methanococcus jannaschii).